A 942-amino-acid polypeptide reads, in one-letter code: Protein NLP1 (942 aa).

Pro residues predominate over residues methionine 1 to proline 11. Disordered regions lie at residues methionine 1–alanine 32, threonine 77–alanine 106, valine 594–glutamate 620, phenylalanine 723–serine 753, and serine 759–leucine 778. Positions methionine 21–alanine 32 are enriched in gly residues. Positions asparagine 597–aspartate 609 are enriched in polar residues. The RWP-RK domain maps to aspartate 609–threonine 690. Positions serine 743–serine 753 are enriched in low complexity. Residues valine 765 to serine 774 are compositionally biased toward polar residues. In terms of domain architecture, PB1 spans serine 844–serine 927.

It localises to the nucleus. Its function is as follows. Probable transcription factor. In Oryza sativa subsp. japonica (Rice), this protein is Protein NLP1 (NLP1).